The primary structure comprises 397 residues: Protein-glutamate methylesterase/protein-glutamine glutaminase of group 2 operon (397 aa).

Residues 21–139 (RVMIVDDSVV…EASAADTFHH (119 aa)) form the Response regulatory domain. D72 carries the post-translational modification 4-aspartylphosphate. Positions 199–388 (PFSTLAPKVL…LPLNQIGAKV (190 aa)) constitute a CheB-type methylesterase domain. Active-site residues include S213, H241, and D337.

It belongs to the CheB family. Post-translationally, phosphorylated by CheA. Phosphorylation of the N-terminal regulatory domain activates the methylesterase activity.

Its subcellular location is the cytoplasm. It carries out the reaction [protein]-L-glutamate 5-O-methyl ester + H2O = L-glutamyl-[protein] + methanol + H(+). The enzyme catalyses L-glutaminyl-[protein] + H2O = L-glutamyl-[protein] + NH4(+). Its function is as follows. Involved in chemotaxis. Part of a chemotaxis signal transduction system that modulates chemotaxis in response to various stimuli. Catalyzes the demethylation of specific methylglutamate residues introduced into the chemoreceptors (methyl-accepting chemotaxis proteins or MCP) by CheR. Also mediates the irreversible deamidation of specific glutamine residues to glutamic acid. In Bradyrhizobium diazoefficiens (strain JCM 10833 / BCRC 13528 / IAM 13628 / NBRC 14792 / USDA 110), this protein is Protein-glutamate methylesterase/protein-glutamine glutaminase of group 2 operon.